The chain runs to 305 residues: tRNA dimethylallyltransferase (305 aa).

11 to 18 (GPTAVGKT) is an ATP binding site. 13–18 (TAVGKT) is a substrate binding site. Residues 36 to 39 (DSMQ) form an interaction with substrate tRNA region.

Belongs to the IPP transferase family. In terms of assembly, monomer. Mg(2+) serves as cofactor.

The enzyme catalyses adenosine(37) in tRNA + dimethylallyl diphosphate = N(6)-dimethylallyladenosine(37) in tRNA + diphosphate. In terms of biological role, catalyzes the transfer of a dimethylallyl group onto the adenine at position 37 in tRNAs that read codons beginning with uridine, leading to the formation of N6-(dimethylallyl)adenosine (i(6)A). The chain is tRNA dimethylallyltransferase from Listeria innocua serovar 6a (strain ATCC BAA-680 / CLIP 11262).